A 745-amino-acid chain; its full sequence is Copper-transporting ATPase (745 aa).

The region spanning 1–67 (MKESFYIEGM…LIEKLGYSPK (67 aa)) is the HMA domain. Topologically, residues 1–83 (MKESFYIEGM…KKEFFSPNVK (83 aa)) are cytoplasmic. Positions 12 and 15 each coordinate Cu cation. The chain crosses the membrane as a helical span at residues 84–104 (LALAVIFTLFVVYLSMGAMLS). Over 105–124 (PSLLPKSLLAIDNHSNFLNA) the chain is Extracellular. The helical transmembrane segment at 125 to 144 (CLQLIGTLIVMHWGRDFYIQ) threads the bilayer. The Cytoplasmic segment spans residues 145–151 (GFKALWH). A helical membrane pass occupies residues 152–172 (RQPNMSSLIAIGTSAALISSL). Residues 173 to 194 (WQLYLVYTDHYTDQWSYGHYYF) are Extracellular-facing. A helical transmembrane segment spans residues 195–215 (ESVCVILMFVMVGKRIENVSK). Over 216–343 (DKALDAMQAL…KAEISRLADK (128 aa)) the chain is Cytoplasmic. Residues 344 to 366 (VSSVFVPSVIAIAILAFVVWLII) traverse the membrane as a helical segment. Residues 367-379 (APKPDFWWNFGIA) are Extracellular-facing. The chain crosses the membrane as a helical span at residues 380–397 (LEVFVSVLVISCPCALGL). The Cytoplasmic segment spans residues 398-685 (ATLMSILVAN…KLSQATIKNI (288 aa)). The active-site 4-aspartylphosphate intermediate is aspartate 435. Residues aspartate 631 and aspartate 635 each coordinate Mg(2+). Residues 686 to 705 (KENLFWAFCYNSVFIPLACG) traverse the membrane as a helical segment. Residues 706–716 (VLYKANIMLSP) lie on the Extracellular side of the membrane. The chain crosses the membrane as a helical span at residues 717–735 (AIAGLAMSLSSVSVVLNSQ). Residues 736–745 (RLRNFKIKDH) are Cytoplasmic-facing.

Belongs to the cation transport ATPase (P-type) (TC 3.A.3) family. Type IB subfamily.

The protein localises to the cell membrane. The catalysed reaction is Cu(2+)(in) + ATP + H2O = Cu(2+)(out) + ADP + phosphate + H(+). In terms of biological role, probably involved in copper export. The polypeptide is Copper-transporting ATPase (copA) (Helicobacter pylori (Campylobacter pylori)).